The sequence spans 743 residues: Phosphoribosylformylglycinamidine synthase subunit PurL (743 aa).

H50 is a catalytic residue. Positions 53 and 92 each coordinate ATP. E94 provides a ligand contact to Mg(2+). Substrate-binding positions include 95 to 98 (SHNH) and R117. The active-site Proton acceptor is H96. D118 is a binding site for Mg(2+). Position 241 (Q241) interacts with substrate. Residue D269 participates in Mg(2+) binding. 313-315 (ESQ) serves as a coordination point for substrate. Residues D494 and G531 each contribute to the ATP site. N532 is a binding site for Mg(2+). Residue S534 coordinates substrate.

This sequence belongs to the FGAMS family. In terms of assembly, monomer. Part of the FGAM synthase complex composed of 1 PurL, 1 PurQ and 2 PurS subunits.

The protein localises to the cytoplasm. The catalysed reaction is N(2)-formyl-N(1)-(5-phospho-beta-D-ribosyl)glycinamide + L-glutamine + ATP + H2O = 2-formamido-N(1)-(5-O-phospho-beta-D-ribosyl)acetamidine + L-glutamate + ADP + phosphate + H(+). It participates in purine metabolism; IMP biosynthesis via de novo pathway; 5-amino-1-(5-phospho-D-ribosyl)imidazole from N(2)-formyl-N(1)-(5-phospho-D-ribosyl)glycinamide: step 1/2. In terms of biological role, part of the phosphoribosylformylglycinamidine synthase complex involved in the purines biosynthetic pathway. Catalyzes the ATP-dependent conversion of formylglycinamide ribonucleotide (FGAR) and glutamine to yield formylglycinamidine ribonucleotide (FGAM) and glutamate. The FGAM synthase complex is composed of three subunits. PurQ produces an ammonia molecule by converting glutamine to glutamate. PurL transfers the ammonia molecule to FGAR to form FGAM in an ATP-dependent manner. PurS interacts with PurQ and PurL and is thought to assist in the transfer of the ammonia molecule from PurQ to PurL. The chain is Phosphoribosylformylglycinamidine synthase subunit PurL from Mesorhizobium japonicum (strain LMG 29417 / CECT 9101 / MAFF 303099) (Mesorhizobium loti (strain MAFF 303099)).